A 275-amino-acid polypeptide reads, in one-letter code: Ribosomal RNA small subunit methyltransferase A (275 aa).

Residues Asn-20, Leu-22, Gly-47, Glu-68, Asp-90, and Asn-110 each contribute to the S-adenosyl-L-methionine site.

It belongs to the class I-like SAM-binding methyltransferase superfamily. rRNA adenine N(6)-methyltransferase family. RsmA subfamily.

Its subcellular location is the cytoplasm. The enzyme catalyses adenosine(1518)/adenosine(1519) in 16S rRNA + 4 S-adenosyl-L-methionine = N(6)-dimethyladenosine(1518)/N(6)-dimethyladenosine(1519) in 16S rRNA + 4 S-adenosyl-L-homocysteine + 4 H(+). Specifically dimethylates two adjacent adenosines (A1518 and A1519) in the loop of a conserved hairpin near the 3'-end of 16S rRNA in the 30S particle. May play a critical role in biogenesis of 30S subunits. The chain is Ribosomal RNA small subunit methyltransferase A from Chlorobaculum tepidum (strain ATCC 49652 / DSM 12025 / NBRC 103806 / TLS) (Chlorobium tepidum).